The chain runs to 464 residues: tRNA modification GTPase MnmE (464 aa).

(6S)-5-formyl-5,6,7,8-tetrahydrofolate-binding residues include arginine 27, glutamate 90, and lysine 129. A TrmE-type G domain is found at 222–384; sequence GVTLVLAGSV…LYDKIKTLIS (163 aa). Residues 232-237, 251-257, and 276-279 contribute to the GTP site; these read NAGKSS, SSYPGTT, and DTAG. Mg(2+) contacts are provided by serine 236 and threonine 257. (6S)-5-formyl-5,6,7,8-tetrahydrofolate is bound at residue lysine 464.

Belongs to the TRAFAC class TrmE-Era-EngA-EngB-Septin-like GTPase superfamily. TrmE GTPase family. Homodimer. Heterotetramer of two MnmE and two MnmG subunits. K(+) serves as cofactor.

Its subcellular location is the cytoplasm. Its function is as follows. Exhibits a very high intrinsic GTPase hydrolysis rate. Involved in the addition of a carboxymethylaminomethyl (cmnm) group at the wobble position (U34) of certain tRNAs, forming tRNA-cmnm(5)s(2)U34. The protein is tRNA modification GTPase MnmE of Borrelia garinii subsp. bavariensis (strain ATCC BAA-2496 / DSM 23469 / PBi) (Borreliella bavariensis).